Here is a 306-residue protein sequence, read N- to C-terminus: MTASLHIILDTDPGIDDAAAIAAALFAPELDLQLITTVAGNVSVEKTTRNALQLLHFWDADVPLAQGAATPLLRPLRDAAYVHGESGMEGYDFVDHQRQPLAKPAFIAIRDVLMNAPEPMTLVAIGPLTNIALLLMHYPECACNIRRLVLMGGSAGRGNFTPNAEFNIAVDPEAAAHVFRSGIEIVMCGLDVTNQAMLSPDFLSKLPALNRTGKMLHSLFNHYRSGSMRTGVRMHDLCAIAWLVRPELFTLQSCFVAVETQGQYTAGTTVVDIEGRLGQPANAQVALALDVDGFRQWVAEVFACAP.

His235 is an active-site residue.

Belongs to the IUNH family. RihC subfamily.

In terms of biological role, hydrolyzes both purine and pyrimidine ribonucleosides with a broad-substrate specificity. The chain is Non-specific ribonucleoside hydrolase RihC from Salmonella agona (strain SL483).